The following is a 477-amino-acid chain: MSGGGNLLTLERDHFKYLFLTSYFDLKDNEHVPSEPMAFIRNYLNCTFDLLDDAVLMNYFNYLQSMQLKHLVGSTSTNIFKFVKPQFRFVCDRTTVDILEFDTRMYIKPGTPVYATNLFTSNPRKMMAFLYAEFGKVFKNKIFVNINNYGCVLAGSAGFLFDDAYVDWNGVRMCAAPRLDNNMHPFRLYLLGEDMAKHFVDNNILPPHPSNAKTRKINNSMFMLKNFYKGLPLFKSKYTVVNSTKIVTRKPNDIFNEIDKELNGNCPFIKFIQRDYIFDAQFPPDLLDLLNEYMTKSSIMKIITKFVIEENPAMSGEMSREIILDRYSVDNYRKLYIKMEITNQFPVMYDHESSYIFVSKDFLQLKGTMNAFYAPKQRILSILAVNRLFGATETIDFHPNLLVYRQSSPPVRLTGDVYVVDKNEKVFLVKHVFSNTVPAYLLIRGDYESSSDLKSLRDLNPWVQNTLLKLLIPDSVQ.

The protein localises to the host cytoplasm. It localises to the host nucleus. The protein resides in the virion. Functionally, required for occlusion-derived virus (ODV) envelopment and subsequent embedding of virions into polyhedra. The chain is Protein AC142 (ORF142) from Autographa californica nuclear polyhedrosis virus (AcMNPV).